Reading from the N-terminus, the 145-residue chain is 3-dehydroquinate dehydratase (145 aa).

The Proton acceptor role is filled by tyrosine 23. Residues asparagine 74, histidine 80, and aspartate 87 each contribute to the substrate site. Catalysis depends on histidine 100, which acts as the Proton donor. Substrate is bound by residues 101 to 102 and arginine 111; that span reads LS.

Belongs to the type-II 3-dehydroquinase family. As to quaternary structure, homododecamer.

It catalyses the reaction 3-dehydroquinate = 3-dehydroshikimate + H2O. It functions in the pathway metabolic intermediate biosynthesis; chorismate biosynthesis; chorismate from D-erythrose 4-phosphate and phosphoenolpyruvate: step 3/7. Its function is as follows. Catalyzes a trans-dehydration via an enolate intermediate. The protein is 3-dehydroquinate dehydratase of Bacillus licheniformis (strain ATCC 14580 / DSM 13 / JCM 2505 / CCUG 7422 / NBRC 12200 / NCIMB 9375 / NCTC 10341 / NRRL NRS-1264 / Gibson 46).